A 456-amino-acid chain; its full sequence is Phosphomethylpyrimidine synthase (456 aa).

Residues Asn-80, Met-109, Tyr-139, His-175, 195–197 (SRG), 236–239 (DSLR), and Glu-275 contribute to the substrate site. His-279 provides a ligand contact to Zn(2+). Tyr-302 provides a ligand contact to substrate. Residue His-343 participates in Zn(2+) binding. Positions 423, 426, and 431 each coordinate [4Fe-4S] cluster.

It belongs to the ThiC family. [4Fe-4S] cluster is required as a cofactor.

The enzyme catalyses 5-amino-1-(5-phospho-beta-D-ribosyl)imidazole + S-adenosyl-L-methionine = 4-amino-2-methyl-5-(phosphooxymethyl)pyrimidine + CO + 5'-deoxyadenosine + formate + L-methionine + 3 H(+). Its pathway is cofactor biosynthesis; thiamine diphosphate biosynthesis. Its function is as follows. Catalyzes the synthesis of the hydroxymethylpyrimidine phosphate (HMP-P) moiety of thiamine from aminoimidazole ribotide (AIR) in a radical S-adenosyl-L-methionine (SAM)-dependent reaction. The chain is Phosphomethylpyrimidine synthase from Prochlorococcus marinus (strain AS9601).